The primary structure comprises 511 residues: GMP synthase [glutamine-hydrolyzing] (511 aa).

Residues 3 to 198 (SVLVLDFGSQ…LLNIAAITPD (196 aa)) form the Glutamine amidotransferase type-1 domain. Residue cysteine 80 is the Nucleophile of the active site. Active-site residues include histidine 172 and glutamate 174. Positions 199-386 (WSSKSFIEHQ…LGIPEDILMR (188 aa)) constitute a GMPS ATP-PPase domain. 226 to 232 (SGGVDST) contacts ATP.

In terms of assembly, homodimer.

It catalyses the reaction XMP + L-glutamine + ATP + H2O = GMP + L-glutamate + AMP + diphosphate + 2 H(+). The protein operates within purine metabolism; GMP biosynthesis; GMP from XMP (L-Gln route): step 1/1. Catalyzes the synthesis of GMP from XMP. This is GMP synthase [glutamine-hydrolyzing] from Chlorobium chlorochromatii (strain CaD3).